The chain runs to 462 residues: Phosphoglycerate kinase, chloroplastic (462 aa).

The transit peptide at 1 to 61 (MALSMKMRAN…AGRSRIVVEA (61 aa)) directs the protein to the chloroplast. (2R)-3-phosphoglycerate is bound by residues Ala-83, Asp-84, Asn-86, Arg-101, Ser-123, His-124, Gly-126, Arg-127, Arg-183, His-215, and Arg-216. Gly-261 lines the ADP pocket. Residue Gly-261 coordinates CDP. AMP-binding residues include Lys-263 and Lys-267. Lys-267 is an ATP binding site. Residue Gly-285 participates in ADP binding. Gly-285 contacts CDP. 2 residues coordinate AMP: Gly-286 and Gly-358. ATP is bound by residues Gly-286 and Gly-358. CDP is bound by residues Gly-383 and Phe-388. Phe-388 serves as a coordination point for ADP. Glu-389 serves as a coordination point for AMP. Positions 389, 420, and 421 each coordinate ATP. Residue Asp-420 participates in Mg(2+) binding.

Belongs to the phosphoglycerate kinase family. Monomer. Mg(2+) is required as a cofactor.

It localises to the plastid. It is found in the chloroplast. It carries out the reaction (2R)-3-phosphoglycerate + ATP = (2R)-3-phospho-glyceroyl phosphate + ADP. The protein operates within carbohydrate biosynthesis; Calvin cycle. The sequence is that of Phosphoglycerate kinase, chloroplastic (PGK) from Volvox carteri (Green alga).